A 152-amino-acid polypeptide reads, in one-letter code: Smith-Magenis syndrome chromosomal region candidate gene 5 protein homolog (152 aa).

The interval 41 to 77 (TPCAGPSSQAPPQPPQASPPAAPDHSRTPSLLASSHS) is disordered. Residues 49–62 (QAPPQPPQASPPAA) are compositionally biased toward pro residues.

The polypeptide is Smith-Magenis syndrome chromosomal region candidate gene 5 protein homolog (SMCR5) (Macaca fascicularis (Crab-eating macaque)).